A 710-amino-acid chain; its full sequence is Polyribonucleotide nucleotidyltransferase (710 aa).

Positions 487 and 493 each coordinate Mg(2+). A KH domain is found at 554 to 613; sequence PRIEVMNIPVDKIREVIGSGGKVIREIVEKTGAKINIEDDGTVKIASSSGKEIEAARKWI. In terms of domain architecture, S1 motif spans 623–691; sequence GQIYEGTVVK…ERGKVRLSMK (69 aa).

This sequence belongs to the polyribonucleotide nucleotidyltransferase family. Mg(2+) is required as a cofactor.

It localises to the cytoplasm. It carries out the reaction RNA(n+1) + phosphate = RNA(n) + a ribonucleoside 5'-diphosphate. Its function is as follows. Involved in mRNA degradation. Catalyzes the phosphorolysis of single-stranded polyribonucleotides processively in the 3'- to 5'-direction. The chain is Polyribonucleotide nucleotidyltransferase from Rhizobium rhizogenes (strain K84 / ATCC BAA-868) (Agrobacterium radiobacter).